The primary structure comprises 190 residues: Potassium-transporting ATPase KdpC subunit (190 aa).

Residues 13–33 (VGFLLLTLMCGVVYPGIVTIF) form a helical membrane-spanning segment.

Belongs to the KdpC family. As to quaternary structure, the system is composed of three essential subunits: KdpA, KdpB and KdpC.

Its subcellular location is the cell membrane. In terms of biological role, part of the high-affinity ATP-driven potassium transport (or Kdp) system, which catalyzes the hydrolysis of ATP coupled with the electrogenic transport of potassium into the cytoplasm. This subunit acts as a catalytic chaperone that increases the ATP-binding affinity of the ATP-hydrolyzing subunit KdpB by the formation of a transient KdpB/KdpC/ATP ternary complex. The polypeptide is Potassium-transporting ATPase KdpC subunit (Listeria monocytogenes serotype 4b (strain CLIP80459)).